A 379-amino-acid polypeptide reads, in one-letter code: GDP-mannose transporter 1 (379 aa).

At 1–39 the chain is on the cytoplasmic side; it reads MTDNRKPEDYTIEMDKLGQNKNYQAPPPPPQPRSSTASS. The disordered stretch occupies residues 17 to 38; it reads LGQNKNYQAPPPPPQPRSSTAS. A helical membrane pass occupies residues 40–60; the sequence is ISNNAALSVLAYCGSSILMTV. The Lumenal segment spans residues 61–69; sequence MNKYVLSSD. The helical transmembrane segment at 70-90 threads the bilayer; it reads FNLNFFLLCVQSLVCIIAIQL. Over 91 to 110 the chain is Cytoplasmic; it reads CKACGLITYRDFNLDEARKW. Residues 111–133 traverse the membrane as a helical segment; it reads FPITLLLIGMIYTGSKALQFLSI. Residues 134-136 lie on the Lumenal side of the membrane; the sequence is PVY. The chain crosses the membrane as a helical span at residues 137–156; that stretch reads TIFKNLTIILIAYGEVLWFG. At 157-162 the chain is on the cytoplasmic side; sequence GSVTNL. A helical membrane pass occupies residues 163-182; the sequence is TLFSFGLMVFSSIIAAWADI. Residues 183 to 198 lie on the Lumenal side of the membrane; the sequence is KHAIESSGDATSKVST. Residues 199–219 traverse the membrane as a helical segment; it reads LNAGYIWMLINCLCTSSYVLG. Residues 220–233 lie on the Cytoplasmic side of the membrane; sequence MRKRIKLTNFKDFD. A helical transmembrane segment spans residues 234 to 254; that stretch reads TMFYNNLLSIPVLIVCSGILE. The Lumenal segment spans residues 255-272; the sequence is DWSPANVARNFPSADRNG. The helical transmembrane segment at 273–293 threads the bilayer; the sequence is IMFAMILSGLSTVFISYTSAW. At 294–301 the chain is on the cytoplasmic side; it reads CVRVTSST. A helical membrane pass occupies residues 302-322; sequence TYSMVGALNKLPIALSGLIFF. The Lumenal portion of the chain corresponds to 323–325; it reads DAP. Residues 326-346 traverse the membrane as a helical segment; the sequence is VTFPSVSAIMVGFVSGIVYAV. Topologically, residues 347-379 are cytoplasmic; that stretch reads AKIKQNAKPKVGILPTTNPVSASSQSMRDSLRS.

The protein belongs to the TPT transporter family. SLC35D subfamily. As to quaternary structure, homooligomer.

It is found in the golgi apparatus membrane. The protein localises to the cytoplasmic vesicle membrane. Its subcellular location is the endoplasmic reticulum membrane. In terms of biological role, involved in the import of GDP-mannose from the cytoplasm into the Golgi lumen. In Emericella nidulans (strain FGSC A4 / ATCC 38163 / CBS 112.46 / NRRL 194 / M139) (Aspergillus nidulans), this protein is GDP-mannose transporter 1 (gmt1).